Reading from the N-terminus, the 467-residue chain is Probable lipase C1672.09 (467 aa).

At 1 to 17 the chain is on the cytoplasmic side; it reads MIQLPFIQRLKWEEYMA. The helical; Signal-anchor for type II membrane protein transmembrane segment at 18-38 threads the bilayer; sequence LFLGFFFVIFEKLLSCLAFMI. The Lumenal segment spans residues 39 to 467; that stretch reads HNTLGLFYRS…NHIAPRNKPI (429 aa). Serine 66 is subject to Phosphoserine. Residues 127–421 enclose the AB hydrolase-1 domain; it reads PVVYCHHGLL…SYEHLDMIWA (295 aa). Serine 222 acts as the Nucleophile in catalysis. 2 N-linked (GlcNAc...) asparagine glycosylation sites follow: asparagine 311 and asparagine 316. Catalysis depends on charge relay system residues aspartate 389 and histidine 415. A compositionally biased stretch (basic and acidic residues) spans 440–457; sequence HHPPEHEENDKENREIQK. The tract at residues 440–467 is disordered; the sequence is HHPPEHEENDKENREIQKNHIAPRNKPI.

The protein belongs to the AB hydrolase superfamily. Lipase family.

It localises to the cytoplasm. The protein localises to the membrane. Functionally, probable lipase. The chain is Probable lipase C1672.09 from Schizosaccharomyces pombe (strain 972 / ATCC 24843) (Fission yeast).